Reading from the N-terminus, the 249-residue chain is NADH-quinone oxidoreductase subunit C (249 aa).

Belongs to the complex I 30 kDa subunit family. As to quaternary structure, NDH-1 is composed of 14 different subunits. Subunits NuoB, C, D, E, F, and G constitute the peripheral sector of the complex.

The protein localises to the cell inner membrane. It catalyses the reaction a quinone + NADH + 5 H(+)(in) = a quinol + NAD(+) + 4 H(+)(out). Its function is as follows. NDH-1 shuttles electrons from NADH, via FMN and iron-sulfur (Fe-S) centers, to quinones in the respiratory chain. The immediate electron acceptor for the enzyme in this species is believed to be ubiquinone. Couples the redox reaction to proton translocation (for every two electrons transferred, four hydrogen ions are translocated across the cytoplasmic membrane), and thus conserves the redox energy in a proton gradient. The polypeptide is NADH-quinone oxidoreductase subunit C (Stenotrophomonas maltophilia (strain R551-3)).